Here is a 1131-residue protein sequence, read N- to C-terminus: Inositol hexakisphosphate and diphosphoinositol-pentakisphosphate kinase 2 (1131 aa).

A disordered region spans residues 21–53; it reads DELLDQSKPENLDNLYEHTEDEEDEEDDEYDSP. Residues 25-38 show a composition bias toward basic and acidic residues; sequence DQSKPENLDNLYEH. Acidic residues predominate over residues 39 to 52; the sequence is TEDEEDEEDDEYDS. 67–68 serves as a coordination point for substrate; it reads KK. ATP is bound by residues arginine 148, lysine 201, histidine 208, arginine 227, 251–254, and 260–262; these read EEFM and DVK. 227 to 228 contributes to the substrate binding site; that stretch reads RK. Residues lysine 262 and arginine 276 each coordinate substrate. Residues serine 278, aspartate 323, and 335-337 each bind ATP; that span reads DVN. 340–343 serves as a coordination point for substrate; the sequence is SFVK. Residues 385–456 are polyphosphoinositide-binding domain; that stretch reads PTTSGTKMEL…VLDIARQLLV (72 aa). A disordered region spans residues 912 to 951; the sequence is KGCEEDKNLPSGFGYRPASQENESSKKHTHANDSDEDLGV. Residues 934 to 951 are compositionally biased toward basic and acidic residues; it reads ESSKKHTHANDSDEDLGV.

This sequence belongs to the histidine acid phosphatase family. VIP1 subfamily.

Its subcellular location is the cytoplasm. The protein resides in the cytosol. The catalysed reaction is 1D-myo-inositol hexakisphosphate + ATP = 1-diphospho-1D-myo-inositol 2,3,4,5,6-pentakisphosphate + ADP. The enzyme catalyses 5-diphospho-1D-myo-inositol 1,2,3,4,6-pentakisphosphate + ATP + H(+) = 1,5-bis(diphospho)-1D-myo-inositol 2,3,4,6-tetrakisphosphate + ADP. Its function is as follows. Bifunctional inositol kinase that acts in concert with the IP6K kinases IP6K1, IP6K2 and IP6K3 to synthesize the diphosphate group-containing inositol pyrophosphates diphosphoinositol pentakisphosphate, PP-InsP5, and bis-diphosphoinositol tetrakisphosphate, (PP)2-InsP4. PP-InsP5 and (PP)2-InsP4, also respectively called InsP7 and InsP8, regulate a variety of cellular processes, including apoptosis, vesicle trafficking, cytoskeletal dynamics, exocytosis, insulin signaling and neutrophil activation. Phosphorylates inositol hexakisphosphate (InsP6) at position 1 to produce PP-InsP5 which is in turn phosphorylated by IP6Ks to produce (PP)2-InsP4. Alternatively, phosphorylates PP-InsP5 at position 1, produced by IP6Ks from InsP6, to produce (PP)2-InsP4. This chain is Inositol hexakisphosphate and diphosphoinositol-pentakisphosphate kinase 2, found in Xenopus laevis (African clawed frog).